Here is a 180-residue protein sequence, read N- to C-terminus: Adenine phosphoribosyltransferase (180 aa).

It belongs to the purine/pyrimidine phosphoribosyltransferase family. Homodimer.

The protein resides in the cytoplasm. It carries out the reaction AMP + diphosphate = 5-phospho-alpha-D-ribose 1-diphosphate + adenine. The protein operates within purine metabolism; AMP biosynthesis via salvage pathway; AMP from adenine: step 1/1. Its function is as follows. Catalyzes a salvage reaction resulting in the formation of AMP, that is energically less costly than de novo synthesis. This chain is Adenine phosphoribosyltransferase, found in Mycolicibacterium paratuberculosis (strain ATCC BAA-968 / K-10) (Mycobacterium paratuberculosis).